A 133-amino-acid polypeptide reads, in one-letter code: MSCIFCKIVKGDIPCVKLAETALSLAFLDIAPTSKGHALVIPKEHAAKMHELSDESCADILPLVKKVTKAIGPENYNVLQNNGRIAHQFVDHVHFHIIPKPNEEYGLGVGWPSYPISPEEIKALGEEISSKIK.

An HIT domain is found at 4-107 (IFCKIVKGDI…IPKPNEEYGL (104 aa)). Residues 29-30 (DI), N81, 87-89 (HQF), and 94-96 (HFH) each bind AMP. A Histidine triad motif motif is present at residues 92–96 (HVHFH). H94 serves as the catalytic Tele-AMP-histidine intermediate.

The protein belongs to the HINT family. As to quaternary structure, homodimer. Mg(2+) is required as a cofactor.

It localises to the nucleus. It carries out the reaction adenosine 5'-phosphoramidate + H2O = AMP + NH4(+). Functionally, hydrolyzes adenosine 5'-monophosphoramidate substrates such as AMP-morpholidate, AMP-N-alanine methyl ester, AMP-alpha-acetyl lysine methyl ester and AMP-NH2. This is Adenosine 5'-monophosphoramidase hnt1 (hnt1) from Schizosaccharomyces pombe (strain 972 / ATCC 24843) (Fission yeast).